Consider the following 153-residue polypeptide: Insulin-like growth factor 1.S (153 aa).

4 cysteine pairs are disulfide-bonded: Cys29-Cys38, Cys54-Cys96, Cys66-Cys109, and Cys100-Cys109. The segment at 49 to 77 is b; the sequence is GPETLCGAELVDTLQFVCGDRGFYFSKPT. Positions 78–89 are c; sequence GYGSNNRRSHHR. The a stretch occupies residues 90–110; sequence GIVDECCFQSCDFRRLEMYCA. Residues 111-118 form a d region; it reads PAKQAKSA. Positions 119-153 are cleaved as a propeptide — e peptide; the sequence is RSVRTQRHTDMPKAQKEVHPKNTSRGNTGSRGFRM. Residues 119–153 are disordered; that stretch reads RSVRTQRHTDMPKAQKEVHPKNTSRGNTGSRGFRM. Over residues 125 to 138 the composition is skewed to basic and acidic residues; the sequence is RHTDMPKAQKEVHP. Residues 139 to 153 are compositionally biased toward polar residues; sequence KNTSRGNTGSRGFRM.

It belongs to the insulin family. In terms of tissue distribution, expressed in adult liver, lung, heart, kidney and peritoneal fat.

Its subcellular location is the secreted. Its function is as follows. The insulin-like growth factors, isolated from plasma, are structurally and functionally related to insulin but have a much higher growth-promoting activity. Promotes head development by inhibiting Wnt signaling during embryogenesis. Acts as a ligand for IGF1R. Binds to the alpha subunit of IGF1R, leading to the activation of the intrinsic tyrosine kinase activity which autophosphorylates tyrosine residues in the beta subunit thus initiatiating a cascade of down-stream signaling events leading to activation of the PI3K-AKT/PKB and the Ras-MAPK pathways. Binds to integrins. Its binding to integrins and subsequent ternary complex formation with integrins and IGFR1 are essential for IGF1 signaling. The sequence is that of Insulin-like growth factor 1.S from Xenopus laevis (African clawed frog).